The following is a 497-amino-acid chain: PHD finger protein 10 (497 aa).

Positions 1–61 (MAAAGPGAAL…SSRSCETSSQ (61 aa)) are disordered. A phosphoserine mark is found at Ser-11, Ser-35, and Ser-49. The essential to induce neural progenitor proliferation stretch occupies residues 88–184 (MLQEQVSEYL…HYKEYSQMQQ (97 aa)). The segment at 88–294 (MLQEQVSEYL…PPLDPELPAL (207 aa)) is SAY. A Glycyl lysine isopeptide (Lys-Gly) (interchain with G-Cter in SUMO2) cross-link involves residue Lys-240. Ser-269 is modified (phosphoserine). Over residues 284-295 (EPPLDPELPALD) the composition is skewed to low complexity. Residues 284–367 (EPPLDPELPA…KRSVLSKSVP (84 aa)) are disordered. An essential to induce neural progenitor proliferation region spans residues 291–333 (LPALDSDGDSDDGEDGGGDEKRKNKGTSDSSSGNVSEGDSPPD). Ser-296, Ser-300, Ser-326, and Ser-330 each carry phosphoserine. Residues 296-307 (SDGDSDDGEDGG) show a composition bias toward acidic residues. The segment covering 317–327 (TSDSSSGNVSE) has biased composition (polar residues). Basic and acidic residues predominate over residues 344–358 (KSKDKMATPRKDGSK). The PHD-type 1; degenerate zinc finger occupies 378–435 (LCGICLKGKESNKKGKAESLIHCSQCDNSGHPSCLDMTMELVSMIKTYPWQCMECKTC). Residue Lys-384 forms a Glycyl lysine isopeptide (Lys-Gly) (interchain with G-Cter in SUMO2) linkage. Residues 437–480 (ICGQPHHEEEMMFCDVCDRGYHTFCVGLGAIPSGRWICDCCQRA) form a PHD-type 2; degenerate zinc finger.

Belongs to the SAYP family. In terms of assembly, component of neural progenitors-specific chromatin remodeling complex (npBAF complex) composed of at least, ARID1A/BAF250A or ARID1B/BAF250B, SMARCD1/BAF60A, SMARCD3/BAF60C, SMARCA2/BRM/BAF190B, SMARCA4/BRG1/BAF190A, SMARCB1/BAF47, SMARCC1/BAF155, SMARCE1/BAF57, SMARCC2/BAF170, PHF10/BAF45A, ACTL6A/BAF53A and actin. Interacts with ACTL6A/BAF53A, SMARCA2/BRM/BAF190B, SMARCA4/BRG1/BAF190A and PBRM1/BAF180.

It is found in the nucleus. In terms of biological role, involved in transcription activity regulation by chromatin remodeling. Belongs to the neural progenitors-specific chromatin remodeling complex (npBAF complex) and is required for the proliferation of neural progenitors. During neural development a switch from a stem/progenitor to a post-mitotic chromatin remodeling mechanism occurs as neurons exit the cell cycle and become committed to their adult state. The transition from proliferating neural stem/progenitor cells to post-mitotic neurons requires a switch in subunit composition of the npBAF and nBAF complexes. As neural progenitors exit mitosis and differentiate into neurons, npBAF complexes which contain ACTL6A/BAF53A and PHF10/BAF45A, are exchanged for homologous alternative ACTL6B/BAF53B and DPF1/BAF45B or DPF3/BAF45C subunits in neuron-specific complexes (nBAF). The npBAF complex is essential for the self-renewal/proliferative capacity of the multipotent neural stem cells. The nBAF complex along with CREST plays a role regulating the activity of genes essential for dendrite growth. This Rattus norvegicus (Rat) protein is PHD finger protein 10 (Phf10).